Reading from the N-terminus, the 812-residue chain is Ras guanine nucleotide exchange factor J (812 aa).

Low complexity-rich tracts occupy residues 1–36 (MSNP…NSKS) and 53–65 (LLNR…NLNN). Residues 1–146 (MSNPVSINNS…GGSSGGLNMS (146 aa)) are disordered. Polar residues predominate over residues 75–86 (SFTSNYQNIYTP). Low complexity predominate over residues 87 to 101 (NNNSYNSSNNNNNNN). A compositionally biased stretch (gly residues) spans 131–141 (NSGGGGGGSSG). One can recognise a LisH domain in the interval 214–246 (GRDTMLQLILQHLQFEGLMDSRKLLEEEARVQY). The segment at 320-382 (IIYVDDKEKE…NNSIGNSNSY (63 aa)) is disordered. The segment covering 323–343 (VDDKEKEKEKEKEKEKEKDKF) has biased composition (basic and acidic residues). The span at 344-382 (GPNSTNSLSGSGSSPNIPSGMNNNSSSIGNNSIGNSNSY) shows a compositional bias: low complexity. The N-terminal Ras-GEF domain occupies 409 to 535 (NKPQVKAASL…LSESLNAKIK (127 aa)). In terms of domain architecture, Ras-GEF spans 573–804 (DEEEIARQLT…YSRSMSFEPR (232 aa)).

In terms of biological role, promotes the exchange of Ras-bound GDP by GTP. The polypeptide is Ras guanine nucleotide exchange factor J (gefJ) (Dictyostelium discoideum (Social amoeba)).